Here is a 268-residue protein sequence, read N- to C-terminus: Type-5 uracil-DNA glycosylase (268 aa).

Residues 1–29 form a disordered region; the sequence is MHPKTGRAFRSPVEPGSGWPGDPATPQTP. Positions 57, 60, 161, and 176 each coordinate [4Fe-4S] cluster.

Belongs to the uracil-DNA glycosylase (UDG) superfamily. Type 5 (UDGb) family.

In terms of biological role, DNA glycosylase with broad substrate specificity. This chain is Type-5 uracil-DNA glycosylase, found in Mycobacterium bovis (strain ATCC BAA-935 / AF2122/97).